Reading from the N-terminus, the 165-residue chain is Coronafacic acid dehydratase (165 aa).

His62 is a catalytic residue.

The protein belongs to the thioester dehydratase family.

The protein operates within phytotoxin biosynthesis; coronatine biosynthesis. This is Coronafacic acid dehydratase (cfa2) from Pseudomonas savastanoi pv. glycinea (Pseudomonas syringae pv. glycinea).